Here is a 339-residue protein sequence, read N- to C-terminus: NADH-quinone oxidoreductase subunit H (339 aa).

8 helical membrane-spanning segments follow: residues 9-29 (IFPL…LILC), 82-102 (ILFV…WAVI), 115-135 (VGVL…IIAG), 161-181 (MGLV…SQIV), 187-207 (MPWW…ISVL), 235-255 (MGFA…SAMT), 275-295 (IPGF…FLWI), and 311-331 (GWKV…SVLI).

This sequence belongs to the complex I subunit 1 family. NDH-1 is composed of 14 different subunits. Subunits NuoA, H, J, K, L, M, N constitute the membrane sector of the complex.

The protein resides in the cell inner membrane. The enzyme catalyses a quinone + NADH + 5 H(+)(in) = a quinol + NAD(+) + 4 H(+)(out). NDH-1 shuttles electrons from NADH, via FMN and iron-sulfur (Fe-S) centers, to quinones in the respiratory chain. The immediate electron acceptor for the enzyme in this species is believed to be ubiquinone. Couples the redox reaction to proton translocation (for every two electrons transferred, four hydrogen ions are translocated across the cytoplasmic membrane), and thus conserves the redox energy in a proton gradient. This subunit may bind ubiquinone. The polypeptide is NADH-quinone oxidoreductase subunit H (Rickettsia bellii (strain OSU 85-389)).